Here is a 249-residue protein sequence, read N- to C-terminus: Ribitol 2-dehydrogenase (249 aa).

Position 20–43 (20–43) interacts with NAD(+); sequence TGAASGIGLECARTLLGAGAKVVL. The active-site Proton acceptor is Tyr-160.

Belongs to the short-chain dehydrogenases/reductases (SDR) family. Homotetramer.

It carries out the reaction ribitol + NAD(+) = D-ribulose + NADH + H(+). The protein is Ribitol 2-dehydrogenase (rbtD) of Klebsiella aerogenes (Enterobacter aerogenes).